We begin with the raw amino-acid sequence, 260 residues long: Voltage-dependent calcium channel gamma-6 subunit (260 aa).

The next 4 helical transmembrane spans lie at 43–63 (LLVA…EFWV), 143–163 (VIAV…IMVL), 169–189 (FLLR…FVSL), and 221–241 (LGCG…FLLL).

It belongs to the PMP-22/EMP/MP20 family. CACNG subfamily. In terms of assembly, interacts with CACNA1C. Identified in a complex with the L-type calcium channel subunits CACNA1C, CACNA2D1 and either CACNB1 or CACNB2. In terms of tissue distribution, detected in heart atrium and ventricle, aorta and skeletal muscle. Detected in heart left ventricle.

It is found in the cell membrane. Regulates the activity of L-type calcium channels that contain CACNA1C as pore-forming subunit. The chain is Voltage-dependent calcium channel gamma-6 subunit (Cacng6) from Rattus norvegicus (Rat).